Consider the following 663-residue polypeptide: Shugoshin 1 (663 aa).

Coiled coils occupy residues 8–29 and 110–132; these read KQAF…RIKK and DTAE…NLLE. Disordered regions lie at residues 207-250, 278-401, and 417-478; these read RNTA…MNKN, EHTV…LNSG, and FRQN…ARKN. Basic and acidic residues-rich tracts occupy residues 231-242, 280-304, 339-358, and 366-394; these read RLEECNNEDKTE, TVVE…REID, KNKE…KAER, and KPWE…KEKM. Residues 427–437 are compositionally biased toward low complexity; that stretch reads NESSLEISSSE. Basic and acidic residues predominate over residues 443–453; sequence SLYKPYKDKSK.

This sequence belongs to the shugoshin family. As to quaternary structure, binds microtubules. Post-translationally, ubiquitinated by the anaphase promoting complex (APC) at the onset of anaphase, conducting to its degradation.

Its subcellular location is the nucleus. The protein resides in the chromosome. It localises to the centromere. The protein localises to the kinetochore. It is found in the nucleus speckle. In terms of biological role, plays a central role in chromosome cohesion during mitosis by preventing premature dissociation of cohesin complex from centromeres after prophase, when most of cohesin complex dissociates from chromosomes arms. May act by preventing phosphorylation of the stag2 subunit of cohesin complex at the centromere, ensuring cohesin persistence at centromere until cohesin cleavage by espl1/separase at anaphase. May regulate kinetochore microtubule stability in mitosis, possibly to sense tension on mitotic chromosomes. The protein is Shugoshin 1 of Xenopus laevis (African clawed frog).